Consider the following 190-residue polypeptide: Ribosome hibernation promotion factor (190 aa).

Belongs to the HPF/YfiA ribosome-associated protein family. Long HPF subfamily. In terms of assembly, interacts with 100S ribosomes.

It is found in the cytoplasm. In terms of biological role, required for dimerization of active 70S ribosomes into 100S ribosomes in stationary phase; 100S ribosomes are translationally inactive and sometimes present during exponential growth. This chain is Ribosome hibernation promotion factor, found in Staphylococcus saprophyticus subsp. saprophyticus (strain ATCC 15305 / DSM 20229 / NCIMB 8711 / NCTC 7292 / S-41).